The sequence spans 355 residues: Chromosomal protein D1 (355 aa).

Position 1 is an N-acetylmethionine (Met1). Residues 1 to 355 (MEEVAVKKRG…NYNDSESVAA (355 aa)) form a disordered region. The a.T hook 1 DNA-binding region spans 7–14 (KKRGRPSK). At Ser30 the chain carries Phosphoserine. 2 consecutive DNA-binding regions (a.T hook) follow at residues 34 to 41 (KKRGRPAK) and 60 to 67 (KIQNDEDP). Acidic residues predominate over residues 64-77 (DEDPEDEGEEDGDG). Residues Ser80, Ser88, and Ser89 each carry the phosphoserine modification. Positions 94–101 (KGRGRPKS) form a DNA-binding region, a.T hook 4. A phosphoserine mark is found at Ser107, Ser109, and Ser112. Thr115 carries the post-translational modification Phosphothreonine. A Phosphoserine modification is found at Ser118. A compositionally biased stretch (basic residues) spans 119-130 (AKKRKAGRPKKH). A DNA-binding region (a.T hook 5) is located at residues 122-129 (RKAGRPKK). A phosphoserine; by CK2 mark is found at Ser133 and Ser135. Over residues 135 to 147 (SENEDDQDEDDDG) the composition is skewed to acidic residues. A phosphoserine mark is found at Ser149, Ser150, Ser161, Ser164, and Ser170. Residues 155-162 (RPVGRPSA) constitute a DNA-binding region (a.T hook 6). Positions 174–181 (RGLGRPKK) form a DNA-binding region, a.T hook 7. Ser186 carries the phosphoserine; by CK2 modification. A DNA-binding region (a.T hook 8) is located at residues 196–203 (KKRGRPPQ). Ser208 bears the Phosphoserine mark. Positions 219–226 (RPRGRPKA) form a DNA-binding region, a.T hook 9. Over residues 237–247 (NDDDQDDENSG) the composition is skewed to acidic residues. Phosphoserine is present on residues Ser246, Ser252, and Ser253. DNA-binding regions (a.T hook) lie at residues 262–269 (KKRGRPSL) and 281–288 (KPRSRPAK). Phosphoserine is present on residues Ser299 and Ser307. The span at 307-318 (SKKESNDEDRAV) shows a compositional bias: basic and acidic residues. Ser311 is subject to Phosphoserine; by CK2. Position 321 is a phosphothreonine (Thr321). Ser332 is subject to Phosphoserine; by CK2. A compositionally biased stretch (polar residues) spans 345 to 355 (DNYNDSESVAA).

Its subcellular location is the nucleus. It localises to the chromosome. In terms of biological role, this satellite DNA-associated protein is a double-stranded DNA binding protein specific for tracts of pure at DNA. It may play a role in organizing the higher-order structure of euchromatin as well as heterochromatin. The chain is Chromosomal protein D1 (D1) from Drosophila melanogaster (Fruit fly).